A 520-amino-acid polypeptide reads, in one-letter code: GMP synthase [glutamine-hydrolyzing] (520 aa).

Residues 12 to 205 form the Glutamine amidotransferase type-1 domain; it reads KIIVLDYGSQ…AISICGARGD (194 aa). Cys-89 acts as the Nucleophile in catalysis. Catalysis depends on residues His-179 and Glu-181. The 190-residue stretch at 206–395 folds into the GMPS ATP-PPase domain; that stretch reads WSMDNFIDME…LGMPEEIVWR (190 aa). 233 to 239 lines the ATP pocket; sequence SGGVDSS.

In terms of assembly, homodimer.

It catalyses the reaction XMP + L-glutamine + ATP + H2O = GMP + L-glutamate + AMP + diphosphate + 2 H(+). It participates in purine metabolism; GMP biosynthesis; GMP from XMP (L-Gln route): step 1/1. Functionally, catalyzes the synthesis of GMP from XMP. In Streptococcus pyogenes serotype M2 (strain MGAS10270), this protein is GMP synthase [glutamine-hydrolyzing].